Here is a 391-residue protein sequence, read N- to C-terminus: Polyketide synthase 5 (391 aa).

The active site involves Cys164.

The protein belongs to the thiolase-like superfamily. Chalcone/stilbene synthases family. As to quaternary structure, homodimer. In terms of tissue distribution, expressed in fruits.

The catalysed reaction is (E)-4-coumaroyl-CoA + 3 malonyl-CoA + 3 H(+) = 2',4,4',6'-tetrahydroxychalcone + 3 CO2 + 4 CoA. It participates in secondary metabolite biosynthesis; flavonoid biosynthesis. Polyketide synthase producing naringenin chalcone. Can use p-coumaryl-CoA as substrate. This Rubus idaeus (Raspberry) protein is Polyketide synthase 5 (PKS5).